The sequence spans 611 residues: CRS2-associated factor 2, chloroplastic (611 aa).

A chloroplast-targeting transit peptide spans Met1–Ser58. The tract at residues Met1–Thr72 is disordered. The segment covering Gln55 to Thr72 has biased composition (polar residues). 2 CRM domains span residues Glu232 to Arg328 and Asp350 to Pro446. Residues Lys486–Asn509 are CRS2 binding. The interval Met554–Asp578 is disordered.

In terms of assembly, interacts with CRS2 and RNA. Part of large ribonucleo-protein complexes that include group IIB introns, CRS2 and CAF2.

The protein localises to the plastid. Its subcellular location is the chloroplast stroma. Its function is as follows. Required for the splicing of group IIB introns in chloroplasts. Forms splicing particles with CRS2. Interacts with RNA and confers intron specificity of the splicing particles. In Zea mays (Maize), this protein is CRS2-associated factor 2, chloroplastic (CAF2).